Reading from the N-terminus, the 196-residue chain is Small ribosomal subunit protein uS4c (196 aa).

Positions 20-39 (GLTRKTPKSGSNLKKKFHSG) are disordered. The S4 RNA-binding domain occupies 89–152 (MRLDNILFRL…RSKCLVQNSI (64 aa)).

Belongs to the universal ribosomal protein uS4 family. Part of the 30S ribosomal subunit. Contacts protein S5. The interaction surface between S4 and S5 is involved in control of translational fidelity.

It is found in the plastid. It localises to the chloroplast. Its function is as follows. One of the primary rRNA binding proteins, it binds directly to 16S rRNA where it nucleates assembly of the body of the 30S subunit. With S5 and S12 plays an important role in translational accuracy. In Dendrocalamus giganteus (Giant bamboo), this protein is Small ribosomal subunit protein uS4c (rps4).